We begin with the raw amino-acid sequence, 74 residues long: Defensin (74 aa).

Residues 1–22 (MRGLCICLVFLLVCGLVSATAA) form the signal peptide. Positions 23 to 36 (APAESEVAHLRVRR) are excised as a propeptide. 3 disulfides stabilise this stretch: C40/C61, C47/C69, and C51/C71.

Hemolymph.

Its subcellular location is the secreted. Antibacterial activity against Gram-positive and Gram-negative bacteria. In Dermacentor variabilis (American dog tick), this protein is Defensin (VSNA1).